Consider the following 110-residue polypeptide: Toxin HigB-2 (110 aa).

Toxic component of a type II toxin-antitoxin (TA) system. Inhibits translation by cleavage of mRNA. This is Toxin HigB-2 (higB-2) from Vibrio cholerae serotype O1 (strain ATCC 39315 / El Tor Inaba N16961).